The sequence spans 37 residues: Large ribosomal subunit protein bL36c (37 aa).

The protein belongs to the bacterial ribosomal protein bL36 family.

The protein resides in the plastid. The protein localises to the chloroplast. The protein is Large ribosomal subunit protein bL36c of Lepidium virginicum (Virginia pepperweed).